A 469-amino-acid chain; its full sequence is uncharacterized protein (469 aa).

Residues 11 to 65 adopt a coiled-coil conformation; that stretch reads LFISVAFSQESVEDLKRLLEEYKKKIQEIERRLEELEKAKKEEEKKKEAVALKPT.

This is an uncharacterized protein from Aquifex aeolicus (strain VF5).